We begin with the raw amino-acid sequence, 509 residues long: Cytochrome P450 monooxygenase fumoA (509 aa).

A helical membrane pass occupies residues 5 to 27 (LANLNFPYLILSACLSAILLSRF). N-linked (GlcNAc...) asparagine glycans are attached at residues Asn-317, Asn-369, and Asn-378. Position 456 (Cys-456) interacts with heme. N-linked (GlcNAc...) asparagine glycosylation is present at Asn-464.

This sequence belongs to the cytochrome P450 family. It depends on heme as a cofactor.

Its subcellular location is the membrane. It functions in the pathway secondary metabolite biosynthesis. In terms of biological role, cytochrome P450 monooxygenase; part of the gene cluster that mediates the biosynthesis of fumosorinone, a 2-pyridone alkaloid that acts as an inhibitor of protein tyrosine phosphatase 1B which is implicated asa negative regulator of insulin receptor signaling and a potential drug target for the treatment of type II diabetes and other associated metabolic syndromes. The polyketide-amino acid backbone of fumosorinone is first assembled by the PKS-NRPS hybrid fumoS. The PKS modules condense one acetyl-CoA starter unit with 7 malonyl-CoA units, programmed C-methylations occurring after the first 3 and the sixth extensions, and cycles of full reduction occurring after the first 2 extensions. Because fumoS lacks a designated enoyl reductase (ER) domain, the required activity is provided the enoyl reductase fumoC. Upon formation of the polyketide backbone on the thiotemplate, the polyketide is transferred to the NRPS module and linked to tyrosine to produce the acyltetramic acid intermediate called prefumosorinone A. The cytochrome P450 monooxygenase fumoA then probably catalyzes an unprecedented oxidative ring expansion of prefumosorinone A to form prefumosorinone B which contains the 2-pyridone core of fumosorinone. The cytochrome P450 monooxygenase fumoB might hydroxylate the nitrogen of prefumosorinone B, but not the acyltetramic acid prefumosorinone A, to form fumosorinone. In Cordyceps fumosorosea (strain ARSEF 2679) (Isaria fumosorosea), this protein is Cytochrome P450 monooxygenase fumoA.